Consider the following 104-residue polypeptide: L-rhamnose mutarotase (104 aa).

Residue tyrosine 18 coordinates substrate. Histidine 22 functions as the Proton donor in the catalytic mechanism. Substrate-binding positions include tyrosine 41 and tryptophan 76 to tryptophan 77.

The protein belongs to the rhamnose mutarotase family. In terms of assembly, homodimer.

It localises to the cytoplasm. It catalyses the reaction alpha-L-rhamnose = beta-L-rhamnose. Its pathway is carbohydrate metabolism; L-rhamnose metabolism. Involved in the anomeric conversion of L-rhamnose. The protein is L-rhamnose mutarotase of Burkholderia ambifaria (strain MC40-6).